The primary structure comprises 342 residues: Ketol-acid reductoisomerase (NADP(+)) (342 aa).

Residues Ala2 to Thr182 enclose the KARI N-terminal Rossmann domain. NADP(+)-binding positions include Phe25 to Gln28, Lys48, Ser51, Ser53, and Asp83 to Gln86. His108 is a catalytic residue. Gly134 contacts NADP(+). The region spanning Thr183–Val328 is the KARI C-terminal knotted domain. Mg(2+) is bound by residues Asp191, Glu195, Glu227, and Glu231. Ser252 is a binding site for substrate.

The protein belongs to the ketol-acid reductoisomerase family. Mg(2+) is required as a cofactor.

The enzyme catalyses (2R)-2,3-dihydroxy-3-methylbutanoate + NADP(+) = (2S)-2-acetolactate + NADPH + H(+). The catalysed reaction is (2R,3R)-2,3-dihydroxy-3-methylpentanoate + NADP(+) = (S)-2-ethyl-2-hydroxy-3-oxobutanoate + NADPH + H(+). It participates in amino-acid biosynthesis; L-isoleucine biosynthesis; L-isoleucine from 2-oxobutanoate: step 2/4. Its pathway is amino-acid biosynthesis; L-valine biosynthesis; L-valine from pyruvate: step 2/4. Involved in the biosynthesis of branched-chain amino acids (BCAA). Catalyzes an alkyl-migration followed by a ketol-acid reduction of (S)-2-acetolactate (S2AL) to yield (R)-2,3-dihydroxy-isovalerate. In the isomerase reaction, S2AL is rearranged via a Mg-dependent methyl migration to produce 3-hydroxy-3-methyl-2-ketobutyrate (HMKB). In the reductase reaction, this 2-ketoacid undergoes a metal-dependent reduction by NADPH to yield (R)-2,3-dihydroxy-isovalerate. This chain is Ketol-acid reductoisomerase (NADP(+)), found in Kineococcus radiotolerans (strain ATCC BAA-149 / DSM 14245 / SRS30216).